Consider the following 455-residue polypeptide: tRNA modification GTPase MnmE (455 aa).

(6S)-5-formyl-5,6,7,8-tetrahydrofolate contacts are provided by R24, E81, and K120. Positions 216 to 378 (GMTVVIAGRP…LREHLKACMG (163 aa)) constitute a TrmE-type G domain. A K(+)-binding site is contributed by N226. GTP contacts are provided by residues 226–231 (NAGKSS), 245–251 (TDIAGTT), 270–273 (DTAG), 335–338 (NKAD), and 359–361 (SAR). S230 is a Mg(2+) binding site. 3 residues coordinate K(+): T245, I247, and T250. T251 provides a ligand contact to Mg(2+). (6S)-5-formyl-5,6,7,8-tetrahydrofolate is bound at residue K455.

It belongs to the TRAFAC class TrmE-Era-EngA-EngB-Septin-like GTPase superfamily. TrmE GTPase family. In terms of assembly, homodimer. Heterotetramer of two MnmE and two MnmG subunits. It depends on K(+) as a cofactor.

Its subcellular location is the cytoplasm. Its function is as follows. Exhibits a very high intrinsic GTPase hydrolysis rate. Involved in the addition of a carboxymethylaminomethyl (cmnm) group at the wobble position (U34) of certain tRNAs, forming tRNA-cmnm(5)s(2)U34. This chain is tRNA modification GTPase MnmE, found in Pseudomonas aeruginosa (strain ATCC 15692 / DSM 22644 / CIP 104116 / JCM 14847 / LMG 12228 / 1C / PRS 101 / PAO1).